A 118-amino-acid chain; its full sequence is Small ribosomal subunit protein uS13 (118 aa).

The tract at residues glycine 94–lysine 118 is disordered.

Belongs to the universal ribosomal protein uS13 family. Part of the 30S ribosomal subunit. Forms a loose heterodimer with protein S19. Forms two bridges to the 50S subunit in the 70S ribosome.

Its function is as follows. Located at the top of the head of the 30S subunit, it contacts several helices of the 16S rRNA. In the 70S ribosome it contacts the 23S rRNA (bridge B1a) and protein L5 of the 50S subunit (bridge B1b), connecting the 2 subunits; these bridges are implicated in subunit movement. Contacts the tRNAs in the A and P-sites. The chain is Small ribosomal subunit protein uS13 from Histophilus somni (strain 129Pt) (Haemophilus somnus).